The sequence spans 284 residues: Tropomyosin (284 aa).

A coiled-coil region spans residues 1 to 284 (MDAIKKKMLA…DQTFAELAGY (284 aa)). A compositionally biased stretch (polar residues) spans 202–213 (NNTKSLEISEQE). The segment at 202–223 (NNTKSLEISEQEASQREDSYEE) is disordered. Residues 214 to 223 (ASQREDSYEE) show a composition bias toward basic and acidic residues.

It belongs to the tropomyosin family. In terms of assembly, homodimer.

In terms of biological role, tropomyosin, in association with the troponin complex, plays a central role in the calcium dependent regulation of muscle contraction. The chain is Tropomyosin from Haliotis rufescens (California red abalone).